The sequence spans 141 residues: Hemoglobin subunit alpha (141 aa).

The 141-residue stretch at 1–141 (VLSAADKSNV…VSTVLTSKYR (141 aa)) folds into the Globin domain. A Phosphoserine modification is found at S3. 2 positions are modified to N6-succinyllysine: K7 and K11. An N6-acetyllysine; alternate modification is found at K16. K16 bears the N6-succinyllysine; alternate mark. A Phosphotyrosine modification is found at Y24. S35 is modified (phosphoserine). K40 carries the post-translational modification N6-succinyllysine. Position 49 is a phosphoserine (S49). Position 58 (H58) interacts with O2. Position 87 (H87) interacts with heme b. A Phosphoserine modification is found at S102. A Phosphothreonine modification is found at T108. At S124 the chain carries Phosphoserine. Phosphothreonine occurs at positions 134 and 137. At S138 the chain carries Phosphoserine.

It belongs to the globin family. As to quaternary structure, heterotetramer of two alpha chains and two beta chains. Red blood cells.

Functionally, involved in oxygen transport from the lung to the various peripheral tissues. Its function is as follows. Hemopressin acts as an antagonist peptide of the cannabinoid receptor CNR1. Hemopressin-binding efficiently blocks cannabinoid receptor CNR1 and subsequent signaling. In Felis catus (Cat), this protein is Hemoglobin subunit alpha (HBA).